We begin with the raw amino-acid sequence, 257 residues long: Snake venom serine protease KN11 (257 aa).

Residues Met-1–Ala-18 form the signal peptide. Positions Gln-19–Leu-24 are excised as a propeptide. Residues Val-25–Ala-248 form the Peptidase S1 domain. Intrachain disulfides connect Cys-31-Cys-162, Cys-49-Cys-65, Cys-97-Cys-255, Cys-141-Cys-209, Cys-173-Cys-188, and Cys-199-Cys-224. Residues His-64 and Asp-109 each act as charge relay system in the active site. N-linked (GlcNAc...) asparagine glycosylation is found at Asn-120 and Asn-121. Ser-203 acts as the Charge relay system in catalysis.

The protein belongs to the peptidase S1 family. Snake venom subfamily. Monomer. In terms of tissue distribution, expressed by the venom gland.

It is found in the secreted. Snake venom serine protease that may act in the hemostasis system of the prey. The sequence is that of Snake venom serine protease KN11 from Trimeresurus stejnegeri (Chinese green tree viper).